We begin with the raw amino-acid sequence, 569 residues long: Beta-lactamase-like protein 4 (569 aa).

Residues 1 to 19 form the signal peptide; sequence MKYYLYLFLLFTFANLLYS. Asn-87, Asn-172, Asn-239, Asn-240, Asn-250, Asn-299, Asn-343, Asn-412, Asn-419, Asn-436, Asn-468, Asn-509, and Asn-535 each carry an N-linked (GlcNAc...) asparagine glycan.

It belongs to the beta-lactamase family.

The protein localises to the secreted. In Dictyostelium discoideum (Social amoeba), this protein is Beta-lactamase-like protein 4.